A 189-amino-acid chain; its full sequence is Xanthine phosphoribosyltransferase (189 aa).

Xanthine contacts are provided by Leu20 and Asn27. 128 to 132 (ANGEA) contributes to the 5-phospho-alpha-D-ribose 1-diphosphate binding site. Lys156 provides a ligand contact to xanthine.

This sequence belongs to the purine/pyrimidine phosphoribosyltransferase family. Xpt subfamily. Homodimer.

Its subcellular location is the cytoplasm. It catalyses the reaction XMP + diphosphate = xanthine + 5-phospho-alpha-D-ribose 1-diphosphate. It participates in purine metabolism; XMP biosynthesis via salvage pathway; XMP from xanthine: step 1/1. Converts the preformed base xanthine, a product of nucleic acid breakdown, to xanthosine 5'-monophosphate (XMP), so it can be reused for RNA or DNA synthesis. The chain is Xanthine phosphoribosyltransferase from Lactobacillus delbrueckii subsp. bulgaricus (strain ATCC 11842 / DSM 20081 / BCRC 10696 / JCM 1002 / NBRC 13953 / NCIMB 11778 / NCTC 12712 / WDCM 00102 / Lb 14).